Consider the following 159-residue polypeptide: UPF0303 protein Ping_1243 (159 aa).

Belongs to the UPF0303 family.

The protein is UPF0303 protein Ping_1243 of Psychromonas ingrahamii (strain DSM 17664 / CCUG 51855 / 37).